The sequence spans 96 residues: Evasin P1100 (96 aa).

An N-terminal signal peptide occupies residues 1 to 28 (MAFNVITFLQFSVFVVILFNINLHSASA). Intrachain disulfides connect Cys-48–Cys-67, Cys-52–Cys-69, and Cys-63–Cys-80. Asn-51 carries N-linked (GlcNAc...) asparagine glycosylation. Residue Asn-74 is glycosylated (N-linked (GlcNAc...) asparagine).

It is found in the secreted. Salivary chemokine-binding protein which binds to host chemokines CXCL1, CXCL2, CXCL3, CXCL5, CXCL6, CXCL10, CXCL11 and CXCL13. This Ixodes ricinus (Common tick) protein is Evasin P1100.